Consider the following 130-residue polypeptide: Small ribosomal subunit protein uS8x (130 aa).

The protein belongs to the universal ribosomal protein uS8 family.

The sequence is that of Small ribosomal subunit protein uS8x (RPS15AD) from Arabidopsis thaliana (Mouse-ear cress).